The following is a 101-amino-acid chain: Protein RnfH (101 aa).

The protein belongs to the UPF0125 (RnfH) family.

The protein is Protein RnfH of Coxiella burnetii (strain CbuG_Q212) (Coxiella burnetii (strain Q212)).